A 679-amino-acid polypeptide reads, in one-letter code: Sodium-dependent phosphate transporter 1 (679 aa).

The next 6 membrane-spanning stretches (helical) occupy residues 21-41 (YLWM…SVGA), 62-82 (ACIL…AKVS), 100-120 (GLLM…QLVA), 158-178 (IVMS…ILFF), 203-223 (ACTV…LLGF), and 230-250 (GTIL…WFFV). Phosphoserine occurs at positions 265 and 269. Transmembrane regions (helical) follow at residues 511 to 531 (VSLL…FAHG), 558 to 578 (VATP…GLWV), 600 to 620 (FSIE…GLPI), and 650 to 670 (IFMA…AIMA). Residues 550–558 (DTGDVSSKV) form an a region.

Belongs to the inorganic phosphate transporter (PiT) (TC 2.A.20) family. As to expression, ubiquitously expressed.

It localises to the cell membrane. The catalysed reaction is 2 Na(+)(out) + phosphate(out) = 2 Na(+)(in) + phosphate(in). Sodium-phosphate symporter which preferentially transports the monovalent form of phosphate with a stoichiometry of two sodium ions per phosphate ion. May play a role in extracellular matrix and cartilage calcification as well as in vascular calcification. Essential for cell proliferation but this function is independent of its phosphate transporter activity. In terms of biological role, (Microbial infection) May function as a retroviral receptor as it confers human cells susceptibility to infection to Gibbon Ape Leukemia Virus (GaLV), Simian sarcoma-associated virus (SSAV) and Feline leukemia virus subgroup B (FeLV-B) as well as 10A1 murine leukemia virus (10A1 MLV). The sequence is that of Sodium-dependent phosphate transporter 1 (SLC20A1) from Homo sapiens (Human).